The sequence spans 284 residues: Nucleotide-binding protein Sden_0486 (284 aa).

Residue 8 to 15 (GRSGSGKS) coordinates ATP. 56-59 (DVRN) is a GTP binding site.

It belongs to the RapZ-like family.

Functionally, displays ATPase and GTPase activities. The polypeptide is Nucleotide-binding protein Sden_0486 (Shewanella denitrificans (strain OS217 / ATCC BAA-1090 / DSM 15013)).